The following is a 20-amino-acid chain: AFELPALPYAKDALEPHISA.

Belongs to the iron/manganese superoxide dismutase family. As to quaternary structure, homodimer. The cofactor is Fe cation.

The protein localises to the periplasm. It catalyses the reaction 2 superoxide + 2 H(+) = H2O2 + O2. In terms of biological role, destroys superoxide anion radicals which are normally produced within the cells and which are toxic to biological systems. This Photobacterium damsela subsp. piscicida (Pasteurella piscicida) protein is Superoxide dismutase [Fe] (sodB).